A 476-amino-acid polypeptide reads, in one-letter code: Probable serine carboxypeptidase CPVL (476 aa).

The first 22 residues, 1–22 (MVGAMWKVIVSLVLLMPGPCDG), serve as a signal peptide directing secretion. N81 and N132 each carry an N-linked (GlcNAc...) asparagine glycan. The active site involves S204. N-linked (GlcNAc...) asparagine glycans are attached at residues N307 and N346. Residues D388 and H448 contribute to the active site.

This sequence belongs to the peptidase S10 family. As to expression, expressed in macrophages but not in other leukocytes. Abundantly expressed in heart and kidney. Also expressed in spleen, leukocytes, and placenta.

Functionally, may be involved in the digestion of phagocytosed particles in the lysosome, participation in an inflammatory protease cascade, and trimming of peptides for antigen presentation. This chain is Probable serine carboxypeptidase CPVL (CPVL), found in Homo sapiens (Human).